The sequence spans 445 residues: tRNA-2-methylthio-N(6)-dimethylallyladenosine synthase (445 aa).

One can recognise an MTTase N-terminal domain in the interval 3–124 (KKLYIKTYGC…LPELISKVVR (122 aa)). The [4Fe-4S] cluster site is built by Cys-12, Cys-48, Cys-87, Cys-162, Cys-166, and Cys-169. In terms of domain architecture, Radical SAM core spans 148 to 380 (YPQGASSFIS…QQELATQQLA (233 aa)). The 63-residue stretch at 383 to 445 (QSCVGSTMRV…ALNSLTGEIL (63 aa)) folds into the TRAM domain.

This sequence belongs to the methylthiotransferase family. MiaB subfamily. In terms of assembly, monomer. It depends on [4Fe-4S] cluster as a cofactor.

The protein localises to the cytoplasm. It carries out the reaction N(6)-dimethylallyladenosine(37) in tRNA + (sulfur carrier)-SH + AH2 + 2 S-adenosyl-L-methionine = 2-methylsulfanyl-N(6)-dimethylallyladenosine(37) in tRNA + (sulfur carrier)-H + 5'-deoxyadenosine + L-methionine + A + S-adenosyl-L-homocysteine + 2 H(+). Catalyzes the methylthiolation of N6-(dimethylallyl)adenosine (i(6)A), leading to the formation of 2-methylthio-N6-(dimethylallyl)adenosine (ms(2)i(6)A) at position 37 in tRNAs that read codons beginning with uridine. The polypeptide is tRNA-2-methylthio-N(6)-dimethylallyladenosine synthase (Rickettsia prowazekii (strain Madrid E)).